The chain runs to 306 residues: Elongation factor Ts (306 aa).

The involved in Mg(2+) ion dislocation from EF-Tu stretch occupies residues 80–83 (TDFV).

The protein belongs to the EF-Ts family.

Its subcellular location is the cytoplasm. Associates with the EF-Tu.GDP complex and induces the exchange of GDP to GTP. It remains bound to the aminoacyl-tRNA.EF-Tu.GTP complex up to the GTP hydrolysis stage on the ribosome. The chain is Elongation factor Ts from Methylorubrum populi (strain ATCC BAA-705 / NCIMB 13946 / BJ001) (Methylobacterium populi).